The following is a 250-amino-acid chain: MLAKRIIPCLDIKDGQTVKGTNFVNLRQAGDPVELGRAYSEQGADELVFLDITASHEGRKTFAELVRRIAANISIPFTVGGGINELSDVDRLLNAGADKISINSSAIRHPQLIDDIAKHFGSQVCVLAVDAKQTENGWKCYLNGGRIETDKELTAWTKEAQERGAGEVLFTSMNHDGVKTGYANEALAELASQLSIPVIASGGAGQMEHFRDAFTLGKADAALAASVFHFGEIKIPELKSYLCDQGITVR.

Catalysis depends on residues Asp11 and Asp130.

This sequence belongs to the HisA/HisF family. Heterodimer of HisH and HisF.

The protein localises to the cytoplasm. It carries out the reaction 5-[(5-phospho-1-deoxy-D-ribulos-1-ylimino)methylamino]-1-(5-phospho-beta-D-ribosyl)imidazole-4-carboxamide + L-glutamine = D-erythro-1-(imidazol-4-yl)glycerol 3-phosphate + 5-amino-1-(5-phospho-beta-D-ribosyl)imidazole-4-carboxamide + L-glutamate + H(+). The protein operates within amino-acid biosynthesis; L-histidine biosynthesis; L-histidine from 5-phospho-alpha-D-ribose 1-diphosphate: step 5/9. Its function is as follows. IGPS catalyzes the conversion of PRFAR and glutamine to IGP, AICAR and glutamate. The HisF subunit catalyzes the cyclization activity that produces IGP and AICAR from PRFAR using the ammonia provided by the HisH subunit. This is Imidazole glycerol phosphate synthase subunit HisF from Bacteroides fragilis (strain YCH46).